Reading from the N-terminus, the 430-residue chain is Enolase (430 aa).

Gln-163 contacts (2R)-2-phosphoglycerate. The active-site Proton donor is the Glu-205. Mg(2+) contacts are provided by Asp-242, Glu-287, and Asp-314. (2R)-2-phosphoglycerate is bound by residues Lys-339, Arg-368, Ser-369, and Lys-390. Lys-339 acts as the Proton acceptor in catalysis.

Belongs to the enolase family. Mg(2+) serves as cofactor.

The protein localises to the cytoplasm. Its subcellular location is the secreted. The protein resides in the cell surface. It carries out the reaction (2R)-2-phosphoglycerate = phosphoenolpyruvate + H2O. It participates in carbohydrate degradation; glycolysis; pyruvate from D-glyceraldehyde 3-phosphate: step 4/5. Functionally, catalyzes the reversible conversion of 2-phosphoglycerate (2-PG) into phosphoenolpyruvate (PEP). It is essential for the degradation of carbohydrates via glycolysis. This chain is Enolase, found in Clostridioides difficile (strain 630) (Peptoclostridium difficile).